Reading from the N-terminus, the 527-residue chain is Peptide chain release factor 3 (527 aa).

A tr-type G domain is found at 9 to 278 (NKRRTFAIIS…GLTQWAPKPQ (270 aa)). Residues 18–25 (SHPDAGKT), 86–90 (DTPGH), and 140–143 (NKLD) contribute to the GTP site.

The protein belongs to the TRAFAC class translation factor GTPase superfamily. Classic translation factor GTPase family. PrfC subfamily.

Its subcellular location is the cytoplasm. Increases the formation of ribosomal termination complexes and stimulates activities of RF-1 and RF-2. It binds guanine nucleotides and has strong preference for UGA stop codons. It may interact directly with the ribosome. The stimulation of RF-1 and RF-2 is significantly reduced by GTP and GDP, but not by GMP. This is Peptide chain release factor 3 from Haemophilus influenzae (strain PittGG).